Reading from the N-terminus, the 296-residue chain is Coiled-coil domain-containing protein 69 (296 aa).

Positions 1 to 18 (MGCRHSRLSSCKPPKKKR) are enriched in basic residues. The disordered stretch occupies residues 1–41 (MGCRHSRLSSCKPPKKKRQEPEPEQPPRPEPHELGPLNGDT). The N-myristoyl glycine moiety is linked to residue Gly-2. Residues 19 to 33 (QEPEPEQPPRPEPHE) show a composition bias toward basic and acidic residues. Residues 48–272 (CASEEAERHQ…QEKEELLYRV (225 aa)) are a coiled coil. Phosphoserine occurs at positions 154 and 241.

It belongs to the CCDC69 family. In terms of tissue distribution, highly expressed in duodenum, esophagus, pancreas, prostate, salivary gland, thymus and urinary bladder.

Its subcellular location is the cytoplasm. It is found in the cytoskeleton. It localises to the spindle. The protein localises to the midbody. Functionally, may act as a scaffold to regulate the recruitment and assembly of spindle midzone components. Required for the localization of AURKB and PLK1 to the spindle midzone. This chain is Coiled-coil domain-containing protein 69, found in Homo sapiens (Human).